A 176-amino-acid chain; its full sequence is Avian agnoprotein 1a (176 aa).

Disordered regions lie at residues 1-85 (MSTP…GKLE) and 116-176 (VYAA…RPAR). Residues 75 to 85 (YDRQNRFGKLE) are compositionally biased toward basic and acidic residues. Residues 76-119 (DRQNRFGKLESEIRETKSQLETLRQELKHLQADVDDLKETVYAA) are a coiled coil. The segment covering 137–161 (TPTATTPEASPAAPTTESTETTGPS) has biased composition (low complexity).

As to quaternary structure, interacts with VP1.

It localises to the virion. The protein resides in the host nucleus. In Budgerigar fledgling disease virus (BFPyV), this protein is Avian agnoprotein 1a.